A 225-amino-acid chain; its full sequence is Octanoyltransferase (225 aa).

In terms of domain architecture, BPL/LPL catalytic spans 31–214 (ENTCDEVWLV…ELTTLLDYTD (184 aa)). Residues 70–77 (RGGQVTYH), 137–139 (SLG), and 150–152 (GLA) contribute to the substrate site. The Acyl-thioester intermediate role is filled by Cys-168.

The protein belongs to the LipB family.

Its subcellular location is the cytoplasm. It carries out the reaction octanoyl-[ACP] + L-lysyl-[protein] = N(6)-octanoyl-L-lysyl-[protein] + holo-[ACP] + H(+). The protein operates within protein modification; protein lipoylation via endogenous pathway; protein N(6)-(lipoyl)lysine from octanoyl-[acyl-carrier-protein]: step 1/2. Functionally, catalyzes the transfer of endogenously produced octanoic acid from octanoyl-acyl-carrier-protein onto the lipoyl domains of lipoate-dependent enzymes. Lipoyl-ACP can also act as a substrate although octanoyl-ACP is likely to be the physiological substrate. This Aliivibrio fischeri (strain ATCC 700601 / ES114) (Vibrio fischeri) protein is Octanoyltransferase.